The chain runs to 139 residues: Plastocyanin (139 aa).

The N-terminal stretch at 1–34 (MKLIAASLRRLSLAVLTVLLVVSSFAVFTPSASA) is a signal peptide. Residues 35–139 (ETYTVKLGSD…GMVGKITVAG (105 aa)) enclose the Plastocyanin-like domain. Positions 73, 123, 126, and 131 each coordinate Cu cation.

It belongs to the plastocyanin family. Requires Cu(2+) as cofactor.

It localises to the cellular thylakoid membrane. Participates in electron transfer between P700 and the cytochrome b6-f complex in photosystem I. This Nostoc sp. (strain PCC 7120 / SAG 25.82 / UTEX 2576) protein is Plastocyanin (petE).